A 149-amino-acid polypeptide reads, in one-letter code: UPF0260 protein PSPTO_3918 (149 aa).

It belongs to the UPF0260 family.

This is UPF0260 protein PSPTO_3918 from Pseudomonas syringae pv. tomato (strain ATCC BAA-871 / DC3000).